The following is a 79-amino-acid chain: Large ribosomal subunit protein uL24 (79 aa).

This sequence belongs to the universal ribosomal protein uL24 family. Part of the 50S ribosomal subunit.

Its function is as follows. One of two assembly initiator proteins, it binds directly to the 5'-end of the 23S rRNA, where it nucleates assembly of the 50S subunit. One of the proteins that surrounds the polypeptide exit tunnel on the outside of the subunit. This chain is Large ribosomal subunit protein uL24, found in Lactobacillus delbrueckii subsp. bulgaricus (strain ATCC BAA-365 / Lb-18).